The following is a 542-amino-acid chain: Bifunctional pantoate ligase/cytidylate kinase (542 aa).

Residues methionine 1–leucine 280 are pantoate--beta-alanine ligase. Methionine 28–histidine 35 contacts ATP. Histidine 35 functions as the Proton donor in the catalytic mechanism. Glutamine 59 provides a ligand contact to (R)-pantoate. A beta-alanine-binding site is contributed by glutamine 59. Residue glycine 150–aspartate 153 coordinates ATP. Residue glutamine 156 coordinates (R)-pantoate. ATP-binding positions include valine 179 and cysteine 187–arginine 190. The interval leucine 281 to glutamine 542 is cytidylate kinase. The interval glycine 287 to proline 311 is disordered.

In the N-terminal section; belongs to the pantothenate synthetase family. It in the C-terminal section; belongs to the cytidylate kinase family. Type 1 subfamily.

The protein localises to the cytoplasm. It carries out the reaction (R)-pantoate + beta-alanine + ATP = (R)-pantothenate + AMP + diphosphate + H(+). The catalysed reaction is CMP + ATP = CDP + ADP. It catalyses the reaction dCMP + ATP = dCDP + ADP. Its pathway is cofactor biosynthesis; (R)-pantothenate biosynthesis; (R)-pantothenate from (R)-pantoate and beta-alanine: step 1/1. Its function is as follows. Catalyzes the condensation of pantoate with beta-alanine in an ATP-dependent reaction via a pantoyl-adenylate intermediate. In terms of biological role, catalyzes the transfer of a phosphate group from ATP to either CMP or dCMP to form CDP or dCDP and ADP, respectively. The protein is Bifunctional pantoate ligase/cytidylate kinase of Synechococcus sp. (strain JA-2-3B'a(2-13)) (Cyanobacteria bacterium Yellowstone B-Prime).